We begin with the raw amino-acid sequence, 333 residues long: GTP 3',8-cyclase (333 aa).

The 215-residue stretch at 7 to 221 folds into the Radical SAM core domain; the sequence is KFGRVHDYIR…FEACNEAGYE (215 aa). Arg-16 lines the GTP pocket. [4Fe-4S] cluster contacts are provided by Cys-23 and Cys-27. Residue Tyr-29 participates in S-adenosyl-L-methionine binding. A [4Fe-4S] cluster-binding site is contributed by Cys-30. Arg-66 is a binding site for GTP. Gly-70 serves as a coordination point for S-adenosyl-L-methionine. Position 97 (Thr-97) interacts with GTP. Ser-121 contacts S-adenosyl-L-methionine. Residue Lys-158 coordinates GTP. Met-192 provides a ligand contact to S-adenosyl-L-methionine. Residues Cys-257 and Cys-260 each coordinate [4Fe-4S] cluster. GTP is bound at residue 262–264; sequence RLR. Residue Cys-274 participates in [4Fe-4S] cluster binding.

The protein belongs to the radical SAM superfamily. MoaA family. In terms of assembly, monomer and homodimer. [4Fe-4S] cluster is required as a cofactor.

The enzyme catalyses GTP + AH2 + S-adenosyl-L-methionine = (8S)-3',8-cyclo-7,8-dihydroguanosine 5'-triphosphate + 5'-deoxyadenosine + L-methionine + A + H(+). It functions in the pathway cofactor biosynthesis; molybdopterin biosynthesis. In terms of biological role, catalyzes the cyclization of GTP to (8S)-3',8-cyclo-7,8-dihydroguanosine 5'-triphosphate. The chain is GTP 3',8-cyclase from Listeria monocytogenes serovar 1/2a (strain ATCC BAA-679 / EGD-e).